A 253-amino-acid chain; its full sequence is Isoprenyl transferase (253 aa).

Residue Asp-32 is part of the active site. Asp-32 serves as a coordination point for Mg(2+). Substrate is bound by residues 33-36 (GNGR), Trp-37, Arg-45, His-49, and 77-79 (STE). Asn-80 (proton acceptor) is an active-site residue. Residues Trp-81, Arg-83, Arg-200, and 206-208 (RLS) each bind substrate. Glu-219 is a binding site for Mg(2+).

This sequence belongs to the UPP synthase family. As to quaternary structure, homodimer. Requires Mg(2+) as cofactor.

In terms of biological role, catalyzes the condensation of isopentenyl diphosphate (IPP) with allylic pyrophosphates generating different type of terpenoids. The protein is Isoprenyl transferase of Clostridium perfringens (strain 13 / Type A).